Reading from the N-terminus, the 37-residue chain is MKVRSSVKKMCDNCKVVRRHGRVLVICSNVKHKQRQG.

Zn(2+)-binding residues include Cys11, Cys14, Cys27, and His32.

Belongs to the bacterial ribosomal protein bL36 family. In terms of assembly, part of the 50S ribosomal subunit. Requires Zn(2+) as cofactor.

Functionally, binds the 23S rRNA. The chain is Large ribosomal subunit protein bL36 (rpmJ) from Deinococcus radiodurans (strain ATCC 13939 / DSM 20539 / JCM 16871 / CCUG 27074 / LMG 4051 / NBRC 15346 / NCIMB 9279 / VKM B-1422 / R1).